Reading from the N-terminus, the 226-residue chain is Probable peroxiredoxin prdx-3 (226 aa).

A Thioredoxin domain is found at 33-191; the sequence is LGPKNTVPAF…TLRVLKAFQF (159 aa). Residue cysteine 78 is the Cysteine sulfenic acid (-SOH) intermediate of the active site.

The protein belongs to the peroxiredoxin family. AhpC/Prx1 subfamily. As to quaternary structure, homodimer; disulfide-linked, upon oxidation.

The catalysed reaction is a hydroperoxide + [thioredoxin]-dithiol = an alcohol + [thioredoxin]-disulfide + H2O. Its function is as follows. Thiol-specific peroxidase that catalyzes the reduction of hydrogen peroxide and organic hydroperoxides to water and alcohols, respectively. Plays a role in cell protection against oxidative stress by detoxifying peroxides and as sensor of hydrogen peroxide-mediated signaling events. The protein is Probable peroxiredoxin prdx-3 (prdx-3) of Caenorhabditis elegans.